The primary structure comprises 467 residues: Methylenetetrahydrofolate--tRNA-(uracil-5-)-methyltransferase TrmFO (467 aa).

Position 10–15 (10–15 (GAGLAG)) interacts with FAD.

This sequence belongs to the MnmG family. TrmFO subfamily. The cofactor is FAD.

The protein resides in the cytoplasm. It catalyses the reaction uridine(54) in tRNA + (6R)-5,10-methylene-5,6,7,8-tetrahydrofolate + NADH + H(+) = 5-methyluridine(54) in tRNA + (6S)-5,6,7,8-tetrahydrofolate + NAD(+). The enzyme catalyses uridine(54) in tRNA + (6R)-5,10-methylene-5,6,7,8-tetrahydrofolate + NADPH + H(+) = 5-methyluridine(54) in tRNA + (6S)-5,6,7,8-tetrahydrofolate + NADP(+). Its function is as follows. Catalyzes the folate-dependent formation of 5-methyl-uridine at position 54 (M-5-U54) in all tRNAs. The protein is Methylenetetrahydrofolate--tRNA-(uracil-5-)-methyltransferase TrmFO of Prochlorococcus marinus (strain MIT 9515).